Here is a 555-residue protein sequence, read N- to C-terminus: Steroid-22-oyl-CoA synthetase (555 aa).

Belongs to the ATP-dependent AMP-binding enzyme family.

The catalysed reaction is 3-oxochol-4-en-22-oate + ATP + CoA = 3-oxochol-4-en-22-oyl-CoA + AMP + diphosphate. The enzyme catalyses 3-hydroxy-9-oxo-9,10-seco-chola-1,3,5-trien-22-oate + ATP + CoA = 3-hydroxy-9-oxo-9,10-seco-chola-1,3,5-trien-22-oyl-CoA + AMP + diphosphate. Its pathway is steroid metabolism. In terms of biological role, involved in cholate catabolism. Catalyzes the ATP-dependent formation of CoA thioesters of steroids with isopropanoyl side chains, likely occurring as degradation intermediates. Can use 4-BNC, HSBNC and HIDP as substrate. The sequence is that of Steroid-22-oyl-CoA synthetase from Rhodococcus jostii (strain RHA1).